A 368-amino-acid polypeptide reads, in one-letter code: Phosphate acyltransferase (368 aa).

Residues 334 to 368 are disordered; sequence AAPLGESGRDANGAGQASPSAGQPAEPSAALSSKT.

This sequence belongs to the PlsX family. Homodimer. Probably interacts with PlsY.

Its subcellular location is the cytoplasm. It catalyses the reaction a fatty acyl-[ACP] + phosphate = an acyl phosphate + holo-[ACP]. It participates in lipid metabolism; phospholipid metabolism. In terms of biological role, catalyzes the reversible formation of acyl-phosphate (acyl-PO(4)) from acyl-[acyl-carrier-protein] (acyl-ACP). This enzyme utilizes acyl-ACP as fatty acyl donor, but not acyl-CoA. The chain is Phosphate acyltransferase from Burkholderia pseudomallei (strain 1106a).